We begin with the raw amino-acid sequence, 578 residues long: Cyclin-SDS (578 aa).

Residues 1–31 form a disordered region; sequence MKEIAMRNSKRKPEPTPFAGKKLRSTRLRRK. A compositionally biased stretch (basic residues) spans 21–31; that stretch reads KKLRSTRLRRK.

Belongs to the cyclin family. As to quaternary structure, may interact with CDKA-1 and CDKB1-1.

Its function is as follows. Meiosis-specific cyclin. Required for normal homolog synapsis and recombination in early to mid-prophase 1. May regulate the timing of sister chromatid separation. The polypeptide is Cyclin-SDS (SDS) (Arabidopsis thaliana (Mouse-ear cress)).